The sequence spans 259 residues: Large ribosomal subunit protein uL3m (259 aa).

Residues Met-1–Phe-15 constitute a mitochondrion transit peptide. A compositionally biased stretch (polar residues) spans Ala-176 to Ser-197. The segment at Ala-176–His-208 is disordered.

The protein belongs to the universal ribosomal protein uL3 family. Component of the mitochondrial large ribosomal subunit (mt-LSU). Mature yeast 74S mitochondrial ribosomes consist of a small (37S) and a large (54S) subunit. The 37S small subunit contains a 15S ribosomal RNA (15S mt-rRNA) and at least 32 different proteins. The 54S large subunit contains a 21S rRNA (21S mt-rRNA) and at least 45 different proteins.

The protein resides in the cytoplasm. It is found in the mitochondrion. Component of the mitochondrial ribosome (mitoribosome), a dedicated translation machinery responsible for the synthesis of mitochondrial genome-encoded proteins, including at least some of the essential transmembrane subunits of the mitochondrial respiratory chain. The mitoribosomes are attached to the mitochondrial inner membrane and translation products are cotranslationally integrated into the membrane. This chain is Large ribosomal subunit protein uL3m (mrpl9), found in Schizosaccharomyces pombe (strain 972 / ATCC 24843) (Fission yeast).